Reading from the N-terminus, the 237-residue chain is Protein FEV (237 aa).

Positions isoleucine 47–aspartate 127 form a DNA-binding region, ETS. Positions glutamine 129–histidine 237 are may mediate active transcriptional repression.

It belongs to the ETS family. Expressed in central serotonergic neurons.

The protein resides in the nucleus. Functions as a transcriptional regulator. May function as a transcriptional repressor. Functions in the differentiation and the maintenance of the central serotonergic neurons. May play a role in cell growth. This chain is Protein FEV (Fev), found in Mus musculus (Mouse).